The chain runs to 192 residues: MGTVLIHVCCAPDLLTTIFHVRDAEFFFYNPNIQPLSEYEKRREAVDKVANHFSLNVRYGEYSTEEIRKWYTAVKDYKDLGEGSKRCERCISFLLERTAQEARKRGHESFSTTLLASPRKNLPMIENIGKTIEEKYGVKFFFKNFRKGGAYQEGVRLSKELGIYRQNYCGCVFSLLERREKHAEISRKRGHM.

Positions 9, 10, 87, and 90 each coordinate [4Fe-4S] cluster. Cysteine 169 and cysteine 171 are disulfide-bonded.

The protein belongs to the QueH family.

The enzyme catalyses epoxyqueuosine(34) in tRNA + AH2 = queuosine(34) in tRNA + A + H2O. Its pathway is tRNA modification; tRNA-queuosine biosynthesis. In terms of biological role, catalyzes the conversion of epoxyqueuosine (oQ) to queuosine (Q), which is a hypermodified base found in the wobble positions of tRNA(Asp), tRNA(Asn), tRNA(His) and tRNA(Tyr). The sequence is that of Epoxyqueuosine reductase QueH from Thermotoga maritima (strain ATCC 43589 / DSM 3109 / JCM 10099 / NBRC 100826 / MSB8).